The sequence spans 294 residues: Phosphate import ATP-binding protein PstB (294 aa).

Polar residues predominate over residues 1–18; the sequence is MSETMTNQNVVNEEQPFN. Residues 1–24 are disordered; that stretch reads MSETMTNQNVVNEEQPFNESKHRS. The 242-residue stretch at 48 to 289 folds into the ABC transporter domain; it reads LEVNKLKLFY…PSCKQTEDYI (242 aa). 80-87 provides a ligand contact to ATP; sequence GPSGCGKS.

Belongs to the ABC transporter superfamily. Phosphate importer (TC 3.A.1.7) family. The complex is composed of two ATP-binding proteins (PstB), two transmembrane proteins (PstC and PstA) and a solute-binding protein (PstS).

The protein localises to the cell inner membrane. It carries out the reaction phosphate(out) + ATP + H2O = ADP + 2 phosphate(in) + H(+). Functionally, part of the ABC transporter complex PstSACB involved in phosphate import. Responsible for energy coupling to the transport system. The sequence is that of Phosphate import ATP-binding protein PstB from Hahella chejuensis (strain KCTC 2396).